Reading from the N-terminus, the 187-residue chain is Phosphatidylethanolamine-binding protein 1 (187 aa).

A phosphoserine mark is found at Ser6 and Ser13. Position 42 is a phosphothreonine (Thr42). Residues Ser52, Ser54, Ser98, and Ser153 each carry the phosphoserine modification. The interval 93–134 (KGNDISSGTVLSDYVGSGPPKGTGLHRYVWLVYEQDRPLKCD) is interaction with RAF1.

The protein belongs to the phosphatidylethanolamine-binding protein family. As to quaternary structure, has a tendency to form dimers by disulfide cross-linking. Interacts with RAF1 and this interaction is enhanced if RAF1 is phosphorylated on residues 'Ser-338', 'Ser-339', 'Tyr-340' and 'Tyr-341'. Interacts with ALOX15; in response to IL13/interleukin-13, prevents the interaction of PEBP1 with RAF1 to activate the ERK signaling cascade.

It localises to the cytoplasm. Its function is as follows. Binds ATP, opioids and phosphatidylethanolamine. Has lower affinity for phosphatidylinositol and phosphatidylcholine. Serine protease inhibitor which inhibits thrombin, neuropsin and chymotrypsin but not trypsin, tissue type plasminogen activator and elastase. Inhibits the kinase activity of RAF1 by inhibiting its activation and by dissociating the RAF1/MEK complex and acting as a competitive inhibitor of MEK phosphorylation. Functionally, HCNP may be involved in the function of the presynaptic cholinergic neurons of the central nervous system. HCNP increases the production of choline acetyltransferase but not acetylcholinesterase. Seems to be mediated by a specific receptor. The sequence is that of Phosphatidylethanolamine-binding protein 1 (PEBP1) from Pongo abelii (Sumatran orangutan).